A 735-amino-acid polypeptide reads, in one-letter code: Protein PAT1 homolog 2 (735 aa).

Disordered regions lie at residues 39-93 and 336-366; these read TFGL…REVK and QLHP…PDPY. Composition is skewed to basic and acidic residues over residues 49 to 59 and 67 to 93; these read EPTKQEEDHKK and PKIE…REVK. Low complexity predominate over residues 346–356; it reads SQRQRPQSSSR.

The protein belongs to the PAT1 family. As to quaternary structure, interacts with ribonucleoprotein complex components. Interacts with cpeb.

The protein resides in the cytoplasm. It is found in the nucleus. In terms of biological role, RNA-binding protein that acts as a translational repressor. This chain is Protein PAT1 homolog 2 (patl2), found in Xenopus tropicalis (Western clawed frog).